The primary structure comprises 536 residues: Phosphoenolpyruvate carboxykinase (ATP) (536 aa).

Residues Arg-61, Tyr-195, and Lys-201 each contribute to the substrate site. ATP contacts are provided by residues Lys-201, His-220, and Gly-236 to Thr-244. Mn(2+) is bound by residues Lys-201 and His-220. Asp-257 provides a ligand contact to Mn(2+). Residues Glu-285, Arg-322, and Thr-447 each contribute to the ATP site. Arg-322 serves as a coordination point for substrate.

The protein belongs to the phosphoenolpyruvate carboxykinase (ATP) family. Mn(2+) serves as cofactor.

It is found in the cytoplasm. The enzyme catalyses oxaloacetate + ATP = phosphoenolpyruvate + ADP + CO2. It functions in the pathway carbohydrate biosynthesis; gluconeogenesis. Its function is as follows. Involved in the gluconeogenesis. Catalyzes the conversion of oxaloacetate (OAA) to phosphoenolpyruvate (PEP) through direct phosphoryl transfer between the nucleoside triphosphate and OAA. This is Phosphoenolpyruvate carboxykinase (ATP) from Mesorhizobium japonicum (strain LMG 29417 / CECT 9101 / MAFF 303099) (Mesorhizobium loti (strain MAFF 303099)).